A 405-amino-acid chain; its full sequence is L-rhamnonate dehydratase (405 aa).

Residues histidine 33 and arginine 59 each contribute to the substrate site. Mg(2+) contacts are provided by aspartate 226, glutamate 252, and glutamate 280. Histidine 329 (proton acceptor) is an active-site residue. Glutamate 349 contacts substrate.

This sequence belongs to the mandelate racemase/muconate lactonizing enzyme family. RhamD subfamily. In terms of assembly, homooctamer; tetramer of dimers. The cofactor is Mg(2+).

It carries out the reaction L-rhamnonate = 2-dehydro-3-deoxy-L-rhamnonate + H2O. In terms of biological role, catalyzes the dehydration of L-rhamnonate to 2-keto-3-deoxy-L-rhamnonate (KDR). This chain is L-rhamnonate dehydratase, found in Escherichia coli (strain SMS-3-5 / SECEC).